The primary structure comprises 132 residues: Small ribosomal subunit protein uS8 (132 aa).

Belongs to the universal ribosomal protein uS8 family. As to quaternary structure, part of the 30S ribosomal subunit. Contacts proteins S5 and S12.

Functionally, one of the primary rRNA binding proteins, it binds directly to 16S rRNA central domain where it helps coordinate assembly of the platform of the 30S subunit. The protein is Small ribosomal subunit protein uS8 of Brucella anthropi (strain ATCC 49188 / DSM 6882 / CCUG 24695 / JCM 21032 / LMG 3331 / NBRC 15819 / NCTC 12168 / Alc 37) (Ochrobactrum anthropi).